We begin with the raw amino-acid sequence, 33 residues long: Protamine-M6/M7 (33 aa).

The segment at 1–33 (PRRRRETSRPIRRRRRARRAPIRRRRRVVRRRR) is disordered.

Testis.

It is found in the nucleus. It localises to the chromosome. Its function is as follows. Protamines substitute for histones in the chromatin of sperm during the haploid phase of spermatogenesis. They compact sperm DNA into a highly condensed, stable and inactive complex. This is Protamine-M6/M7 from Mugil cephalus (Flathead mullet).